Reading from the N-terminus, the 473-residue chain is MLEQVQKFLLSRAACQGSDSQSRYEELFHKLDVNKDGKVDILELQEGLKAMGMEVGKGAEEKIVAAGDTNKDGHLDFGEFIRYLEEHEKKMKIAFTSLDKNKDGKIESAEIMNSLKVLGIKISLDHADKILKSMDSDGTLTVDWNEWRDHFLFNPADNIQQIIRYWKHSTVLDIGDSLTIPDEFTEEEKKTGQWWKQLMAGGMAGAVSRTGTAPLDRLKVMMQVHGSKGNSNIITGLKQMVKEGGIRSLWRGNGVNVIKIAPETAMKFWAYEQYKKLFTSESGKLGTAERFVAGSLAGATAQTSIYPMEVLKTRLAVGRTGQYSGMFDCAKKIMQKEGIRAFYKGYIPNILGIIPYAGIDLAIYETLKNYWLQNHAKDSANPGVLVLLGCGTASSTCGQLASYPLALIRTRMQAQASIEGAPQLNMGGLFRKIVAKEGFLGLYRGIGPNFLKVLPAVSISYVVYEKMKVQLGI.

Residues 1-173 (MLEQVQKFLL…RYWKHSTVLD (173 aa)) are regulatory N-terminal domain. The Mitochondrial intermembrane portion of the chain corresponds to 1-197 (MLEQVQKFLL…EKKTGQWWKQ (197 aa)). 4 consecutive EF-hand domains span residues 19–54 (DSQS…MGME), 55–88 (VGKG…EEHE), 86–121 (EHEK…LGIK), and 122–157 (ISLD…NPAD). Positions 32, 34, 36, 38, 43, 68, 70, 72, 74, 79, 99, 101, 103, 105, 110, 135, 137, 139, 141, and 146 each coordinate Ca(2+). The tract at residues 159–168 (IQQIIRYWKH) is linker region. The C-terminal transmembrane transporter domain stretch occupies residues 174-473 (IGDSLTIPDE…YEKMKVQLGI (300 aa)). 3 Solcar repeats span residues 192 to 277 (GQWW…YKKL), 285 to 370 (LGTA…LKNY), and 382 to 470 (PGVL…MKVQ). Residues 198 to 215 (LMAGGMAGAVSRTGTAPL) traverse the membrane as a helical segment. Residues 216-251 (DRLKVMMQVHGSKGNSNIITGLKQMVKEGGIRSLWR) are Mitochondrial matrix-facing. The chain crosses the membrane as a helical span at residues 252 to 271 (GNGVNVIKIAPETAMKFWAY). Residues 272–294 (EQYKKLFTSESGKLGTAERFVAG) are Mitochondrial intermembrane-facing. Residues 295-308 (SLAGATAQTSIYPM) traverse the membrane as a helical segment. Over 309–344 (EVLKTRLAVGRTGQYSGMFDCAKKIMQKEGIRAFYK) the chain is Mitochondrial matrix. The chain crosses the membrane as a helical span at residues 345–364 (GYIPNILGIIPYAGIDLAIY). The Mitochondrial intermembrane portion of the chain corresponds to 365 to 387 (ETLKNYWLQNHAKDSANPGVLVL). The chain crosses the membrane as a helical span at residues 388–405 (LGCGTASSTCGQLASYPL). Residues 406–444 (ALIRTRMQAQASIEGAPQLNMGGLFRKIVAKEGFLGLYR) are Mitochondrial matrix-facing. Residues 445-464 (GIGPNFLKVLPAVSISYVVY) form a helical membrane-spanning segment. The Mitochondrial intermembrane portion of the chain corresponds to 465–473 (EKMKVQLGI).

The protein belongs to the mitochondrial carrier (TC 2.A.29) family. Monomer.

It is found in the mitochondrion inner membrane. The enzyme catalyses Mg(2+)(out) + phosphate(in) + ATP(out) = Mg(2+)(in) + phosphate(out) + ATP(in). It carries out the reaction ADP(out) + phosphate(in) + H(+)(out) = ADP(in) + phosphate(out) + H(+)(in). The catalysed reaction is AMP(out) + phosphate(in) = AMP(in) + phosphate(out). It catalyses the reaction phosphate(in) + ATP(out) + 2 H(+)(out) = phosphate(out) + ATP(in) + 2 H(+)(in). The enzyme catalyses dADP(in) + ADP(out) = dADP(out) + ADP(in). It carries out the reaction Mg(2+)(in) + ADP(out) + ATP(in) + H(+)(out) = Mg(2+)(out) + ADP(in) + ATP(out) + H(+)(in). The catalysed reaction is ADP(out) + diphosphate(in) = ADP(in) + diphosphate(out). It catalyses the reaction dAMP(in) + ADP(out) + H(+)(out) = dAMP(out) + ADP(in) + H(+)(in). The enzyme catalyses 3'-AMP(in) + ADP(out) + H(+)(out) = 3'-AMP(out) + ADP(in) + H(+)(in). It carries out the reaction dAMP(out) + phosphate(in) = dAMP(in) + phosphate(out). The catalysed reaction is 3'-AMP(out) + phosphate(in) = 3'-AMP(in) + phosphate(out). It catalyses the reaction dADP(out) + phosphate(in) + H(+)(out) = dADP(in) + phosphate(out) + H(+)(in). Activated by an increase in cytosolic calcium levels that induce a conformational change of the N-terminal regulatory domain, uncapping the channel and allowing transport. Inhibited by bathophenanthroline, mersalyl, p-hydroxymercuribenzoate, bromcresol purple and tannic acid. In terms of biological role, electroneutral antiporter that mediates the transport of adenyl nucleotides through the inner mitochondrial membrane. Originally identified as an ATP-magnesium/inorganic phosphate antiporter, it also acts as a broad specificity adenyl nucleotide antiporter. By regulating the mitochondrial matrix adenyl nucleotide pool could adapt to changing cellular energetic demands and indirectly regulate adenyl nucleotide-dependent metabolic pathways. The polypeptide is Mitochondrial adenyl nucleotide antiporter SLC25A24-B (slc25a24-b) (Xenopus laevis (African clawed frog)).